Reading from the N-terminus, the 204-residue chain is Serotype 3 fimbrial subunit (204 aa).

The signal sequence occupies residues 1-25 (MSKFSYPALRAALILAASPVLPALA). Cys-41 and Cys-84 form a disulfide bridge.

The protein belongs to the fimbrial protein family.

It localises to the fimbrium. Functionally, bordetella pertussis is the causative agent of whooping cough. An essential step in the disease process is the attachment of the bacteria to the ciliated epithelium of the respiratory tract, enabling the organism to resist normal host-clearance mechanisms. It is unclear which bacterial cell surface component are responsible for adherence but the fimbriae of B.pertussis are prime candidates for being involved in this process. In Bordetella pertussis (strain Tohama I / ATCC BAA-589 / NCTC 13251), this protein is Serotype 3 fimbrial subunit (fim3).